The chain runs to 298 residues: Probable phosphoserine phosphatase (298 aa).

D82 (nucleophile) is an active-site residue. Mg(2+)-binding residues include D82 and D84. The active-site Proton donor is the D84. Substrate is bound by residues E91, R127, 170–171 (SG), and K217. D240 is a binding site for Mg(2+). Position 243 (N243) interacts with substrate.

This sequence belongs to the HAD-like hydrolase superfamily. SerB family. Mg(2+) is required as a cofactor.

It catalyses the reaction O-phospho-L-serine + H2O = L-serine + phosphate. The catalysed reaction is O-phospho-D-serine + H2O = D-serine + phosphate. It participates in amino-acid biosynthesis; L-serine biosynthesis; L-serine from 3-phospho-D-glycerate: step 3/3. The polypeptide is Probable phosphoserine phosphatase (Schizosaccharomyces pombe (strain 972 / ATCC 24843) (Fission yeast)).